The following is a 119-amino-acid chain: MNRIAFVFTHGPHGDAAGREGLDALLATSALAEDIGVFFIADGVLLLLEQQQPAQILARDFVATFGVLSLYDVDSLYLCAESAAERGLDADAGWVLNAEWLSAADWRQRLSAYDTVMTF.

Belongs to the DsrF/TusC family. In terms of assembly, heterohexamer, formed by a dimer of trimers. The hexameric TusBCD complex contains 2 copies each of TusB, TusC and TusD. The TusBCD complex interacts with TusE.

Its subcellular location is the cytoplasm. Its function is as follows. Part of a sulfur-relay system required for 2-thiolation of 5-methylaminomethyl-2-thiouridine (mnm(5)s(2)U) at tRNA wobble positions. The polypeptide is Protein TusC (Sodalis glossinidius (strain morsitans)).